The sequence spans 756 residues: 5-methyltetrahydropteroyltriglutamate--homocysteine methyltransferase (756 aa).

Residues arginine 20–lysine 23 and lysine 114 contribute to the 5-methyltetrahydropteroyltri-L-glutamate site. Residues isoleucine 433–serine 435 and glutamate 486 each bind L-homocysteine. L-methionine-binding positions include isoleucine 433–serine 435 and glutamate 486. 5-methyltetrahydropteroyltri-L-glutamate is bound by residues arginine 517 to cysteine 518 and tryptophan 563. Aspartate 601 is an L-homocysteine binding site. Position 601 (aspartate 601) interacts with L-methionine. Glutamate 607 lines the 5-methyltetrahydropteroyltri-L-glutamate pocket. Positions 643, 645, and 667 each coordinate Zn(2+). Catalysis depends on histidine 696, which acts as the Proton donor. Position 728 (cysteine 728) interacts with Zn(2+).

It belongs to the vitamin-B12 independent methionine synthase family. Zn(2+) is required as a cofactor.

It carries out the reaction 5-methyltetrahydropteroyltri-L-glutamate + L-homocysteine = tetrahydropteroyltri-L-glutamate + L-methionine. Its pathway is amino-acid biosynthesis; L-methionine biosynthesis via de novo pathway; L-methionine from L-homocysteine (MetE route): step 1/1. In terms of biological role, catalyzes the transfer of a methyl group from 5-methyltetrahydrofolate to homocysteine resulting in methionine formation. This Mycolicibacterium paratuberculosis (strain ATCC BAA-968 / K-10) (Mycobacterium paratuberculosis) protein is 5-methyltetrahydropteroyltriglutamate--homocysteine methyltransferase.